We begin with the raw amino-acid sequence, 140 residues long: Small ribosomal subunit protein uS19 (140 aa).

A disordered region spans residues 55–74; that stretch reads LAEARESGTEETANNPIRTH.

It belongs to the universal ribosomal protein uS19 family.

Functionally, protein S19 forms a complex with S13 that binds strongly to the 16S ribosomal RNA. In Halobacterium salinarum (strain ATCC 29341 / DSM 671 / R1), this protein is Small ribosomal subunit protein uS19.